A 306-amino-acid chain; its full sequence is MTFLRVVKNKAYFRRFQVKFRRRREGKTDYYARRRLVAQDKNKYDSPKYRLVVRLTNKRVICQIVSSTLVGDKVHASADSSELVHYGVKVGLTNYAAAYCTGLLLARRLLTKLKLDSQFVGKVEADGELYHVEEDDNERRPFKALLDVGIKNVTTGNRVFGALKGACDGGLHVPHSEKRFPGYSVDDENNGTYDAQAHRDRIFGTHVANYMEYLKEEDPEKYKKQFSAYLKLGLDSESLEDMYASAHENIRKNPVLPTKPKRKLKHVREGSKVLTSKGSYVRNVKITKAQRRERVKQKISLLVNES.

This sequence belongs to the universal ribosomal protein uL18 family. In terms of assembly, component of the large ribosomal subunit (LSU).

It is found in the cytoplasm. Its subcellular location is the nucleus. Its function is as follows. Component of the ribosome, a large ribonucleoprotein complex responsible for the synthesis of proteins in the cell. The small ribosomal subunit (SSU) binds messenger RNAs (mRNAs) and translates the encoded message by selecting cognate aminoacyl-transfer RNA (tRNA) molecules. The large subunit (LSU) contains the ribosomal catalytic site termed the peptidyl transferase center (PTC), which catalyzes the formation of peptide bonds, thereby polymerizing the amino acids delivered by tRNAs into a polypeptide chain. The nascent polypeptides leave the ribosome through a tunnel in the LSU and interact with protein factors that function in enzymatic processing, targeting, and the membrane insertion of nascent chains at the exit of the ribosomal tunnel. This chain is Large ribosomal subunit protein uL18 (RPL5), found in Theileria annulata.